The sequence spans 1183 residues: LRR receptor-like serine/threonine-protein kinase FLS2 (1183 aa).

A signal peptide spans 1–41 (MERNKFASKMSQHYTKTICIAVVLVAVLFSLSSAAAAGSGA). Residues 42 to 809 (AVSVQLEALL…GKKRVFSRTG (768 aa)) are Extracellular-facing. The cysteines at positions 87 and 94 are disulfide-linked. Residues N88 and N120 are each glycosylated (N-linked (GlcNAc...) asparagine). LRR repeat units follow at residues 97 to 120 (AGQV…FLGN), 121 to 145 (ISTL…LGRL), 147 to 169 (ELEQ…LCNC), 171 to 193 (AMWA…IGDL), 194 to 217 (SNLE…MAKL), 218 to 241 (KGIM…IGDL), 242 to 265 (SNLQ…LGRC), 267 to 289 (NLTL…LGEL), 290 to 313 (TNLE…LRRC), 315 to 337 (SLLN…LGEL), 338 to 361 (PSLQ…LTNL), 363 to 385 (NLTI…IGSL), and 386 to 409 (RNLR…ISNC). C167 and C189 are disulfide-bonded. 2 N-linked (GlcNAc...) asparagine glycosylation sites follow: N168 and N181. N267 is a glycosylation site (N-linked (GlcNAc...) asparagine). 4 N-linked (GlcNAc...) asparagine glycosylation sites follow: N363, N395, N408, and N414. 14 LRR repeats span residues 433–457 (LQSL…LFDC), 459–480 (QLQK…LVGQ), 481–505 (LGNL…IGNM), 507–529 (KLIS…ISNM), 530–553 (SSLQ…VFEL), 555–577 (QLTI…VANL), 578–600 (RSLS…ALGR), 601–625 (LDQL…VIAS), 627–651 (SNVQ…IGGL), 652–675 (VMVQ…LAGC), 676–699 (KNLY…LFPQ), 701–724 (DLLT…IAAL), 725–748 (KHIQ…LANL), and 749–773 (TALR…VFRN). N-linked (GlcNAc...) asparagine glycosylation is found at N483, N504, and N528. The N-linked (GlcNAc...) asparagine glycan is linked to N591. N634 carries an N-linked (GlcNAc...) asparagine glycan. Residues N707, N747, N755, and N773 are each glycosylated (N-linked (GlcNAc...) asparagine). The helical transmembrane segment at 810 to 830 (LVILVVLIALSTLLLLMVATI) threads the bilayer. The Cytoplasmic portion of the chain corresponds to 831-1183 (LLVSYRRYRR…LKMSKLVGED (353 aa)). Residues 876–1179 (FDQGNVIGSS…LSSLLKMSKL (304 aa)) enclose the Protein kinase domain. Residues 882–890 (IGSSNLSTV) and K908 each bind ATP. The active-site Proton acceptor is the D1013.

It belongs to the protein kinase superfamily. Ser/Thr protein kinase family. As to quaternary structure, interacts with SERK2.

The protein localises to the cell membrane. It carries out the reaction L-seryl-[protein] + ATP = O-phospho-L-seryl-[protein] + ADP + H(+). The catalysed reaction is L-threonyl-[protein] + ATP = O-phospho-L-threonyl-[protein] + ADP + H(+). Constitutes the pattern-recognition receptor (PPR) that determines the specific perception of flagellin (flg22), a potent elicitor of the defense response to pathogen-associated molecular patterns (PAMPs). Recognizes flg22 from Pseudomonas aeruginosa and Acidovorax avenae. flg22 is a peptide derived from the bacterial flagellin N-terminus sequence. Does not recognize flg22 from Xanthomonas oryzae pv. oryzae (Xoo) or Xanthomonas oryzae pv. oryzicola (Xoc). The sequence is that of LRR receptor-like serine/threonine-protein kinase FLS2 from Oryza sativa subsp. japonica (Rice).